Consider the following 564-residue polypeptide: 60 kDa lysophospholipase (564 aa).

In terms of domain architecture, Asparaginase/glutaminase spans 9 to 355 (RRLLAIYTGG…NDRKKLLAKD (347 aa)). The active-site Acyl-ester intermediate is Thr19. An asparaginase region spans residues 41-350 (TLHMFHDEEY…PGLSLNDRKK (310 aa)). Substrate contacts are provided by residues 84 to 86 (DSS) and 116 to 117 (TD). ANK repeat units lie at residues 141-170 (GAQV…YVIP), 396-426 (VLLP…DLNL), 430-459 (SGQT…DVDA), 463-492 (DGQS…RLSP), and 530-559 (DGHC…SVCA). Ser478 is modified (phosphoserine).

It in the N-terminal section; belongs to the asparaginase 1 family. In terms of assembly, monomer.

The catalysed reaction is a 1-acyl-sn-glycero-3-phosphocholine + H2O = sn-glycerol 3-phosphocholine + a fatty acid + H(+). It catalyses the reaction L-asparagine + H2O = L-aspartate + NH4(+). It carries out the reaction a 1-O-alkyl-2-acetyl-sn-glycero-3-phosphocholine + H2O = a 1-O-alkyl-sn-glycero-3-phosphocholine + acetate + H(+). The enzyme catalyses 1-hexadecanoyl-sn-glycero-3-phosphocholine + H2O = sn-glycerol 3-phosphocholine + hexadecanoate + H(+). The catalysed reaction is 2 1-hexadecanoyl-sn-glycero-3-phosphocholine = 1,2-dihexadecanoyl-sn-glycero-3-phosphocholine + sn-glycerol 3-phosphocholine. It catalyses the reaction 1-octadecanoyl-sn-glycero-3-phosphocholine + H2O = octadecanoate + sn-glycerol 3-phosphocholine + H(+). It carries out the reaction 1-(9Z-octadecenoyl)-sn-glycero-3-phosphocholine + H2O = sn-glycerol 3-phosphocholine + (9Z)-octadecenoate + H(+). The enzyme catalyses 1-hexadecanoyl-sn-glycero-3-phosphoethanolamine + H2O = sn-glycero-3-phosphoethanolamine + hexadecanoate + H(+). The catalysed reaction is 1-(9Z-octadecenoyl)-sn-glycero-3-phosphoethanolamine + H2O = sn-glycero-3-phosphoethanolamine + (9Z)-octadecenoate + H(+). It catalyses the reaction 1-hexadecanoyl-sn-glycero-3-phosphoethanolamine + 1-hexadecanoyl-sn-glycero-3-phosphocholine = 1,2-dihexadecanoyl-sn-glycero-3-phosphoethanolamine + sn-glycerol 3-phosphocholine. It carries out the reaction 2-(5Z,8Z,11Z,14Z)-eicosatetraenoyl-sn-glycero-3-phosphocholine + H2O = sn-glycerol 3-phosphocholine + (5Z,8Z,11Z,14Z)-eicosatetraenoate + H(+). The enzyme catalyses 2-hexadecanoyl-sn-glycero-3-phosphocholine + H2O = sn-glycerol 3-phosphocholine + hexadecanoate + H(+). The catalysed reaction is 2 2-hexadecanoyl-sn-glycero-3-phosphocholine = 1,2-dihexadecanoyl-sn-glycero-3-phosphocholine + sn-glycerol 3-phosphocholine. It catalyses the reaction 1-O-(9Z)-octadecenoyl-2-O-acetyl-sn-glycero-3-phosphocholine + H2O = 2-acetyl-sn-glycero-3-phosphocholine + (9Z)-octadecenoate + H(+). It carries out the reaction a 1-acyl-sn-glycero-3-phospho-(1D-myo-inositol) + 1-hexadecanoyl-sn-glycero-3-phosphocholine = a 1-acyl-2-hexadecanoyl-sn-glycero-3-phospho-(1D-myo-inositol) + sn-glycerol 3-phosphocholine. The enzyme catalyses 2 2-(5Z,8Z,11Z,14Z)-eicosatetraenoyl-sn-glycero-3-phosphocholine = 1,2-di-(5Z,8Z,11Z,14Z-eicosatetraenoyl)-sn-glycero-3-phosphocholine + sn-glycerol 3-phosphocholine. In terms of biological role, exhibits lysophospholipase, transacylase, PAF acetylhydrolase and asparaginase activities. Can catalyze three types of transacylation reactions: (1) acyl transfer from 1-acyl-sn-glycero-3-phosphocholine (1-acyl-GPC) to the sn-1(3) positions of glycerol and 2-acylglycerol (sn-1 to -1(3) transfer), (2) acyl transfer from 1-acyl-GPC to the sn-2 positions of 1-acyl-GPC, 1-acyl-sn-glycero-3-phosphoethanolamine (1-acyl-GPE), and other lysophospholipids (sn-1 to -2 transfer) and (3) acyl transfer from 2-acyl-GPC to the sn-1 position of 2-acyl-GPC and 2-acyl-GPE (sn-2 to -1 transfer). Mediates the synthesis of 1-arachidonoyl species of phospholipids by transferring the arachidonoyl residue from 2-arachidonoyl lysophospholipid to the sn-1 position of 2-acyl lysophospholipid. In Mus musculus (Mouse), this protein is 60 kDa lysophospholipase (Aspg).